Consider the following 297-residue polypeptide: Cyclin-dependent kinase 1 (297 aa).

Positions 4–287 (FEKIEKIGEG…AKDILEHPYF (284 aa)) constitute a Protein kinase domain. Residues 10 to 18 (IGEGTYGVV) and lysine 33 each bind ATP. Residue threonine 14 is modified to Phosphothreonine. Tyrosine 15 bears the Phosphotyrosine mark. Catalysis depends on aspartate 128, which acts as the Proton acceptor. Tyrosine 160 carries the phosphotyrosine modification. A Phosphothreonine; by CAK modification is found at threonine 161.

This sequence belongs to the protein kinase superfamily. CMGC Ser/Thr protein kinase family. CDC2/CDKX subfamily. Forms a stable but non-covalent complex with a regulatory subunit and with a cyclin. Component of the Frs-CycA-Cdk1 complex composed of Cdk1, CycA and Z600.

The protein localises to the nucleus. The catalysed reaction is L-seryl-[protein] + ATP = O-phospho-L-seryl-[protein] + ADP + H(+). The enzyme catalyses L-threonyl-[protein] + ATP = O-phospho-L-threonyl-[protein] + ADP + H(+). It carries out the reaction [DNA-directed RNA polymerase] + ATP = phospho-[DNA-directed RNA polymerase] + ADP + H(+). With respect to regulation, phosphorylation at Thr-14 or Tyr-15 inactivates the enzyme, while phosphorylation at Thr-161 activates it. Its function is as follows. Plays a key role in the control of the eukaryotic cell cycle. Required for entry into S-phase and mitosis. In embryos, promotes the release of Rif1 from chromatin during mid-blastula transition. p34 is a component of the kinase complex that phosphorylates the repetitive C-terminus of RNA polymerase II. This Drosophila melanogaster (Fruit fly) protein is Cyclin-dependent kinase 1.